The sequence spans 130 residues: Protein ApaG (130 aa).

The ApaG domain maps to Glu3–Leu127.

This chain is Protein ApaG, found in Maricaulis maris (strain MCS10) (Caulobacter maris).